A 142-amino-acid polypeptide reads, in one-letter code: Large ribosomal subunit protein uL11 (142 aa).

The protein belongs to the universal ribosomal protein uL11 family. Part of the ribosomal stalk of the 50S ribosomal subunit. Interacts with L10 and the large rRNA to form the base of the stalk. L10 forms an elongated spine to which L12 dimers bind in a sequential fashion forming a multimeric L10(L12)X complex. Post-translationally, one or more lysine residues are methylated.

Its function is as follows. Forms part of the ribosomal stalk which helps the ribosome interact with GTP-bound translation factors. This is Large ribosomal subunit protein uL11 from Pasteurella multocida (strain Pm70).